The primary structure comprises 364 residues: Lipoyl synthase, mitochondrial (364 aa).

The tract at residues 34–53 is disordered; that stretch reads PNFQDFIQNSDNSKDDFENY. [4Fe-4S] cluster is bound by residues Cys99, Cys104, Cys110, Cys130, Cys134, Cys137, and Ser345. In terms of domain architecture, Radical SAM core spans 115-334; the sequence is EHGTQTATIM…EQRGNELGFL (220 aa).

The protein belongs to the radical SAM superfamily. Lipoyl synthase family. [4Fe-4S] cluster is required as a cofactor.

It is found in the mitochondrion. The catalysed reaction is [[Fe-S] cluster scaffold protein carrying a second [4Fe-4S](2+) cluster] + N(6)-octanoyl-L-lysyl-[protein] + 2 oxidized [2Fe-2S]-[ferredoxin] + 2 S-adenosyl-L-methionine + 4 H(+) = [[Fe-S] cluster scaffold protein] + N(6)-[(R)-dihydrolipoyl]-L-lysyl-[protein] + 4 Fe(3+) + 2 hydrogen sulfide + 2 5'-deoxyadenosine + 2 L-methionine + 2 reduced [2Fe-2S]-[ferredoxin]. It functions in the pathway protein modification; protein lipoylation via endogenous pathway; protein N(6)-(lipoyl)lysine from octanoyl-[acyl-carrier-protein]: step 2/2. Catalyzes the radical-mediated insertion of two sulfur atoms into the C-6 and C-8 positions of the octanoyl moiety bound to the lipoyl domains of lipoate-dependent enzymes, thereby converting the octanoylated domains into lipoylated derivatives. The polypeptide is Lipoyl synthase, mitochondrial (Drosophila grimshawi (Hawaiian fruit fly)).